A 117-amino-acid polypeptide reads, in one-letter code: Large ribosomal subunit protein bL19 (117 aa).

Belongs to the bacterial ribosomal protein bL19 family.

In terms of biological role, this protein is located at the 30S-50S ribosomal subunit interface and may play a role in the structure and function of the aminoacyl-tRNA binding site. This Bacteroides fragilis (strain ATCC 25285 / DSM 2151 / CCUG 4856 / JCM 11019 / LMG 10263 / NCTC 9343 / Onslow / VPI 2553 / EN-2) protein is Large ribosomal subunit protein bL19.